The primary structure comprises 781 residues: Protein translocase subunit SecA 2 (781 aa).

ATP is bound by residues glutamine 85, 103–107, and aspartate 491; that span reads GEGKT.

It belongs to the SecA family. Monomer and homodimer. Part of the essential Sec protein translocation apparatus which comprises SecA, SecYEG and auxiliary proteins SecDF. Other proteins may also be involved.

The protein resides in the cell membrane. Its subcellular location is the cytoplasm. The enzyme catalyses ATP + H2O + cellular proteinSide 1 = ADP + phosphate + cellular proteinSide 2.. Functionally, part of the Sec protein translocase complex. Interacts with the SecYEG preprotein conducting channel. Has a central role in coupling the hydrolysis of ATP to the transfer of proteins into and across the cell membrane, serving as an ATP-driven molecular motor driving the stepwise translocation of polypeptide chains across the membrane. This is Protein translocase subunit SecA 2 from Clostridioides difficile (strain 630) (Peptoclostridium difficile).